A 283-amino-acid polypeptide reads, in one-letter code: 2-dehydro-3-deoxyphosphooctonate aldolase (283 aa).

Belongs to the KdsA family.

It is found in the cytoplasm. The enzyme catalyses D-arabinose 5-phosphate + phosphoenolpyruvate + H2O = 3-deoxy-alpha-D-manno-2-octulosonate-8-phosphate + phosphate. The protein operates within carbohydrate biosynthesis; 3-deoxy-D-manno-octulosonate biosynthesis; 3-deoxy-D-manno-octulosonate from D-ribulose 5-phosphate: step 2/3. Its pathway is bacterial outer membrane biogenesis; lipopolysaccharide biosynthesis. The sequence is that of 2-dehydro-3-deoxyphosphooctonate aldolase from Prochlorococcus marinus (strain MIT 9313).